Reading from the N-terminus, the 610-residue chain is Estrogen receptor beta-2 (610 aa).

Residues 1–170 (MSSSTGPAPA…GILGKGDTHF (170 aa)) are modulating. 2 consecutive NR C4-type zinc fingers follow at residues 171–191 (CAVCHDYASGYHYGVWSCEGC) and 207–231 (CPATNQCTIDKSRRKSCQACRLRKC). Positions 171-236 (CAVCHDYASG…RLRKCYEVGM (66 aa)) form a DNA-binding region, nuclear receptor. The NR LBD domain occupies 302-538 (SPEQLVNCIL…DLLLEMLDAN (237 aa)). A disordered region spans residues 566 to 596 (HTSKQQPALKESNQDTRHSPQAEGTVDKTLH). A compositionally biased stretch (basic and acidic residues) spans 577–596 (SNQDTRHSPQAEGTVDKTLH).

This sequence belongs to the nuclear hormone receptor family. NR3 subfamily. In terms of assembly, binds DNA as a homodimer. Can form a heterodimer with ER-alpha. Predominantly expressed in pituitary, telencephalon and hypothalamus as well as in the liver.

It localises to the nucleus. Binds estrogens with an affinity similar to that of ER-alpha, and activates expression of reporter genes containing estrogen response elements (ERE) in an estrogen-dependent manner. The polypeptide is Estrogen receptor beta-2 (esr2b) (Carassius auratus (Goldfish)).